The following is a 551-amino-acid chain: Glucose-6-phosphate isomerase (551 aa).

Glutamate 349 (proton donor) is an active-site residue. Active-site residues include histidine 378 and lysine 480.

Belongs to the GPI family.

Its subcellular location is the cytoplasm. The enzyme catalyses alpha-D-glucose 6-phosphate = beta-D-fructose 6-phosphate. The protein operates within carbohydrate biosynthesis; gluconeogenesis. It participates in carbohydrate degradation; glycolysis; D-glyceraldehyde 3-phosphate and glycerone phosphate from D-glucose: step 2/4. In terms of biological role, catalyzes the reversible isomerization of glucose-6-phosphate to fructose-6-phosphate. This chain is Glucose-6-phosphate isomerase, found in Prochlorococcus marinus (strain MIT 9313).